The primary structure comprises 178 residues: NADH-quinone oxidoreductase subunit B 1 (178 aa).

Residues Cys-39, Cys-40, Cys-104, and Cys-135 each contribute to the [4Fe-4S] cluster site.

Belongs to the complex I 20 kDa subunit family. As to quaternary structure, NDH-1 is composed of 14 different subunits. Subunits NuoB, C, D, E, F, and G constitute the peripheral sector of the complex. The cofactor is [4Fe-4S] cluster.

Its subcellular location is the cell inner membrane. The catalysed reaction is a quinone + NADH + 5 H(+)(in) = a quinol + NAD(+) + 4 H(+)(out). Its function is as follows. NDH-1 shuttles electrons from NADH, via FMN and iron-sulfur (Fe-S) centers, to quinones in the respiratory chain. The immediate electron acceptor for the enzyme in this species is believed to be a menaquinone. Couples the redox reaction to proton translocation (for every two electrons transferred, four hydrogen ions are translocated across the cytoplasmic membrane), and thus conserves the redox energy in a proton gradient. This chain is NADH-quinone oxidoreductase subunit B 1, found in Cytophaga hutchinsonii (strain ATCC 33406 / DSM 1761 / CIP 103989 / NBRC 15051 / NCIMB 9469 / D465).